The chain runs to 142 residues: Large ribosomal subunit protein uL11 (142 aa).

The protein belongs to the universal ribosomal protein uL11 family. In terms of assembly, part of the ribosomal stalk of the 50S ribosomal subunit. Interacts with L10 and the large rRNA to form the base of the stalk. L10 forms an elongated spine to which L12 dimers bind in a sequential fashion forming a multimeric L10(L12)X complex. Post-translationally, one or more lysine residues are methylated.

In terms of biological role, forms part of the ribosomal stalk which helps the ribosome interact with GTP-bound translation factors. The protein is Large ribosomal subunit protein uL11 of Shewanella sediminis (strain HAW-EB3).